Consider the following 442-residue polypeptide: Zinc finger protein sfp1 (442 aa).

Residues 193–208 (AASSDMSSDEASSQAE) show a composition bias toward low complexity. 2 disordered regions span residues 193 to 219 (AASSDMSSDEASSQAETTGTPKKMPES) and 304 to 333 (SPFVRKSSSDLEAKPSKKQRSTPAFSHDSP). C2H2-type zinc fingers lie at residues 350–375 (YKCPVPNCDKAYKNQNGLKYHKLHGH) and 399–422 (YRCEVCSKRYKNLNGLKYHRTHSH).

It is found in the cytoplasm. The protein resides in the nucleus. The polypeptide is Zinc finger protein sfp1 (sfp1) (Schizosaccharomyces pombe (strain 972 / ATCC 24843) (Fission yeast)).